Here is a 379-residue protein sequence, read N- to C-terminus: Cathepsin B-like cysteine proteinase 6 (379 aa).

The signal sequence occupies residues 1–16 (MKTLLFLSCIVVAAYC). Residues 17 to 104 (ACNDNLESVL…LSKTKDLDLD (88 aa)) constitute a propeptide that is removed on maturation. Disulfide bonds link Cys-118–Cys-147, Cys-130–Cys-174, Cys-166–Cys-233, Cys-167–Cys-170, Cys-203–Cys-237, and Cys-211–Cys-223. Residue Cys-133 is part of the active site. Asn-196 carries an N-linked (GlcNAc...) asparagine glycan. N-linked (GlcNAc...) asparagine; atypical glycosylation is present at Asn-201. Catalysis depends on residues His-305 and Asn-325.

Belongs to the peptidase C1 family.

In Caenorhabditis elegans, this protein is Cathepsin B-like cysteine proteinase 6 (cpr-6).